A 417-amino-acid polypeptide reads, in one-letter code: Zinc-finger homeodomain protein 4 (417 aa).

Positions Met1–Glu12 are enriched in polar residues. Disordered stretches follow at residues Met1–Ala22 and Arg31–Arg50. Positions Ala13–Ala22 are enriched in low complexity. The span at Gln36 to Glu46 shows a compositional bias: acidic residues. The ZF-HD dimerization-type; degenerate zinc-finger motif lies at Tyr145–Glu194. Disordered regions lie at residues Asp281–Lys309 and Asn361–Glu417. The segment covering Ser286–Ser298 has biased composition (gly residues). Residues Lys303–Pro366 constitute a DNA-binding region (homeobox). A compositionally biased stretch (pro residues) spans Pro368–Glu417.

As to quaternary structure, homo- and heterodimer with other ZFHD proteins.

It localises to the nucleus. Putative transcription factor. The protein is Zinc-finger homeodomain protein 4 (ZHD4) of Oryza sativa subsp. japonica (Rice).